The primary structure comprises 179 residues: Putative manganese efflux pump MntP (179 aa).

Helical transmembrane passes span 4-24 (VLIL…GLGI), 39-59 (LFFG…GIGL), 69-89 (IVAF…AFNE), 102-122 (ILLT…YSLH), 128-148 (IYLS…IGVY), and 159-179 (SKAE…ILLF).

This sequence belongs to the MntP (TC 9.B.29) family.

The protein localises to the cell inner membrane. In terms of biological role, probably functions as a manganese efflux pump. The sequence is that of Putative manganese efflux pump MntP from Aliarcobacter butzleri (strain RM4018) (Arcobacter butzleri).